The following is a 388-amino-acid chain: Staphopain A (388 aa).

A signal peptide spans 1–25; it reads MKRNFPKLIALSLIFSLSVTPIANA. Positions 26-214 are excised as a propeptide; it reads ESNSNIKAKD…TSQFKSNNYT (189 aa). Active-site residues include C238, H334, and N355.

Belongs to the peptidase C47 family. In the cytoplasm, prematurely activated/folded ScpA forms a stable non-covalent complex with ScpB. In terms of processing, cleavage leads to the activation of ScpA probably by an auto-catalytic manner.

The protein localises to the secreted. The catalysed reaction is Broad endopeptidase action on proteins including elastin, but rather limited hydrolysis of small-molecule substrates. Assays are conveniently made with hemoglobin, casein or Z-Phe-Arg-NHMec as substrate.. Its activity is regulated as follows. Prematurely activated/folded staphopain A is inhibited by staphostatin A (ScpB), which is probably required to protect staphylococcal cytoplasmic proteins from degradation by ScpA. Cysteine protease that plays an important role in the inhibition of host innate immune response. Cleaves host elastins found in connective tissues, pulmonary surfactant protein A in the lungs, and the chemokine receptor CXCR2 on leukocytes. Proteolytic cleavage of surfactant protein A impairs bacterial phagocytosis by neutrophils while CXCR2 degradation blocks neutrophil activation and chemotaxis. Additionally, promotes vascular leakage by activating the plasma kallikerin/kinin system, resulting in hypotension. This is Staphopain A (sspP) from Staphylococcus aureus (strain Mu50 / ATCC 700699).